A 1037-amino-acid chain; its full sequence is Nucleoporin NUP120 (1037 aa).

2 leucine-zipper regions span residues 131–152 and 290–311; these read LQLP…WFHL and LLPL…SGIL. A Phosphothreonine modification is found at T417.

As to quaternary structure, component of the nuclear pore complex (NPC). NPC constitutes the exclusive means of nucleocytoplasmic transport. NPCs allow the passive diffusion of ions and small molecules and the active, nuclear transport receptor-mediated bidirectional transport of macromolecules such as proteins, RNAs, ribonucleoparticles (RNPs), and ribosomal subunits across the nuclear envelope. Due to its 8-fold rotational symmetry, all subunits are present with 8 copies or multiples thereof. NUP120 is part of the heptameric 0.5 MDa autoassembling NUP84 NPC subcomplex (NUP84, NUP85, NUP120, NUP133, NUP145C, SEC13 and SEH1).

It is found in the nucleus. The protein localises to the nuclear pore complex. The protein resides in the nucleus membrane. Its function is as follows. Functions as a component of the nuclear pore complex (NPC). NPC components, collectively referred to as nucleoporins (NUPs), can play the role of both NPC structural components and of docking or interaction partners for transiently associated nuclear transport factors. NUP120 is involved in nuclear poly(A)+ RNA and pre-ribosome export, in GSP1 nuclear import, in NPC assembly and distribution, as well as in nuclear envelope organization. The sequence is that of Nucleoporin NUP120 (NUP120) from Saccharomyces cerevisiae (strain ATCC 204508 / S288c) (Baker's yeast).